The chain runs to 398 residues: MKVLVLNCGSSSLKYQLLDMEKETVLAKGLVERIGLEGSRLIIDLPGREKIKKEQPFVNHEVAINAVLEELVREEYGILRNLEEITAIGHRIVHGGEKFSGSVIINEEILKAVEECVNLAPLHNPPNILGIRACQKLLPNTPQVGVFDTAFHQTMPRKAYLYGVPYYWYEKYGIRRYGFHGTSHKYVAYKASEILGKPLNELKIITCHLGNGSSVAAVKEGKSIDTSMGFTPLEGLLMGTRSGNIDPAIVTFIQEKEGLSAAQVNDILNKKSGVLGISGYSDFRDIEERASAGDDKAKLALEMFCYQVAKYIGAYAAAMNGVDAIVFTAGVGENSDVVRKEVCKYLEFLGATLDEEKNKIRGKEAIISTPDSKVKIMVIPTNEELMIAKETLELVVNK.

Residue N7 participates in Mg(2+) binding. K14 lines the ATP pocket. Substrate is bound at residue R91. Catalysis depends on D148, which acts as the Proton donor/acceptor. Residues H208–G212, D282–R284, and G330–N334 contribute to the ATP site. E383 lines the Mg(2+) pocket.

This sequence belongs to the acetokinase family. Homodimer. Mg(2+) is required as a cofactor. Requires Mn(2+) as cofactor.

It localises to the cytoplasm. The enzyme catalyses acetate + ATP = acetyl phosphate + ADP. It functions in the pathway metabolic intermediate biosynthesis; acetyl-CoA biosynthesis; acetyl-CoA from acetate: step 1/2. Catalyzes the formation of acetyl phosphate from acetate and ATP. Can also catalyze the reverse reaction. This Carboxydothermus hydrogenoformans (strain ATCC BAA-161 / DSM 6008 / Z-2901) protein is Acetate kinase.